We begin with the raw amino-acid sequence, 907 residues long: Probable dipeptidyl-aminopeptidase B (907 aa).

Residues 1-11 (MYDQVPYRDTD) show a composition bias toward basic and acidic residues. The disordered stretch occupies residues 1-71 (MYDQVPYRDT…RGKPDEDDDL (71 aa)). At 1 to 88 (MYDQVPYRDT…LKPMERKVRR (88 aa)) the chain is on the cytoplasmic side. Residues 22–36 (SDSNRSSIDTTSTTS) are compositionally biased toward low complexity. Residues 89 to 109 (AMYLLAFLMIGGWFLALAVYV) traverse the membrane as a helical; Signal-anchor for type II membrane protein segment. At 110–907 (SREHFGTPDT…PLRKRNRELV (798 aa)) the chain is on the vacuolar side. N-linked (GlcNAc...) asparagine glycans are attached at residues asparagine 185 and asparagine 341. Serine 746 serves as the catalytic Charge relay system. Asparagine 800 is a glycosylation site (N-linked (GlcNAc...) asparagine). Residues aspartate 823 and histidine 856 each act as charge relay system in the active site.

This sequence belongs to the peptidase S9B family.

The protein localises to the vacuole membrane. The enzyme catalyses Release of an N-terminal dipeptide, Xaa-Yaa-|-Zaa-, from a polypeptide, preferentially when Yaa is Pro, provided Zaa is neither Pro nor hydroxyproline.. Its function is as follows. Type IV dipeptidyl-peptidase which removes N-terminal dipeptides sequentially from polypeptides having unsubstituted N-termini provided that the penultimate residue is proline. This chain is Probable dipeptidyl-aminopeptidase B (DAPB), found in Tuber melanosporum (strain Mel28) (Perigord black truffle).